A 65-amino-acid polypeptide reads, in one-letter code: Large ribosomal subunit protein bL35 (65 aa).

Belongs to the bacterial ribosomal protein bL35 family.

This Chlorobium phaeovibrioides (strain DSM 265 / 1930) (Prosthecochloris vibrioformis (strain DSM 265)) protein is Large ribosomal subunit protein bL35.